Reading from the N-terminus, the 147-residue chain is Protein phosphatase 1 regulatory subunit 14B (147 aa).

The segment covering 1–15 (MADSGPAGGAALAAP) has biased composition (low complexity). The segment at 1-55 (MADSGPAGGAALAAPAPGPGSGSTGPRVYFQSPPGAAGEGPGGADDDGPVRRQGK) is disordered. Alanine 2 carries the N-acetylalanine modification. Serine 21 is subject to Phosphoserine. A Phosphotyrosine modification is found at tyrosine 29. Serine 32 bears the Phosphoserine mark. Threonine 57 bears the Phosphothreonine mark. The stretch at 61–103 (DRKELRKRLNLEEWILEQLTRLYDCQEEEIPELEIDVDELLDM) forms a coiled coil.

Belongs to the PP1 inhibitor family. Post-translationally, phosphorylated primarily on Thr-57 by PKC (in vitro). An unknown Ser is also phosphorylated by PKC (in vitro). In terms of tissue distribution, ubiquitous. Highly expressed in testis. Detected at low levels in the other tissues tested. Highly expressed in cardiac muscle, bladder and aorta (at protein level).

Its subcellular location is the cytoplasm. Functionally, inhibitor of PPP1CA. Has over 50-fold higher inhibitory activity when phosphorylated. This Mus musculus (Mouse) protein is Protein phosphatase 1 regulatory subunit 14B (Ppp1r14b).